We begin with the raw amino-acid sequence, 609 residues long: UvrABC system protein C (609 aa).

One can recognise a GIY-YIG domain in the interval 16-94 (SSAGVYRMYD…IKQYMPKYNV (79 aa)). The UVR domain maps to 203–238 (KQVISELVAKMEEAAGQQAYEQAARFRDQIMALRRV).

This sequence belongs to the UvrC family. As to quaternary structure, interacts with UvrB in an incision complex.

It is found in the cytoplasm. In terms of biological role, the UvrABC repair system catalyzes the recognition and processing of DNA lesions. UvrC both incises the 5' and 3' sides of the lesion. The N-terminal half is responsible for the 3' incision and the C-terminal half is responsible for the 5' incision. The protein is UvrABC system protein C of Shewanella sp. (strain ANA-3).